A 500-amino-acid polypeptide reads, in one-letter code: MAPSGGQEAQICDSETFGDSDFVVVANRLPVDLERLPDGSTTWKRSPGGLVTALEPVLRRRRGAWVGWPGVNDDGAEPDLHVLDGPIIQDELELHPVRLSTTDIAQYYEGFSNATLWPLYHDVIVKPLYHREWWDRYVDVNQRFAEAASRAAAHGATVWVQDYQLQLVPKMLRMLRPDLTIGFFLHIPFPPVELFMQMPWRTEIIQGLLGADLVGFHLPGGAQNFLILSRRLVGTDTSRGTVGVRSRFGAAVLGSRTIRVGAFPISVDSGALDHAARDRNIRRRAREIRTELGNPRKILLGVDRLDYTKGIDVRLKAFSELLAEGRVKRDDTVLVQLATPSRERVESYQTLRNDIERQVGHINGEYGEVGHPVVHYLHRPAPRDELIAFFVASDVMLVTPLRDGMNLVAKEYVACRSDLGGALVLSEFTGAAAELRHAYLVNPHDLEGVKDGIEEALNQTEEAGRRRMRSLRRQVLAHDVDRWAQSFLDALAGAHPRGQG.

Position 28 (Arg-28) interacts with D-glucose 6-phosphate. 48–49 (GG) is a binding site for UDP-alpha-D-glucose. Residues Tyr-108 and Asp-162 each coordinate D-glucose 6-phosphate. Positions 304 and 309 each coordinate UDP-alpha-D-glucose. Arg-342 lines the D-glucose 6-phosphate pocket. A UDP-alpha-D-glucose-binding site is contributed by 407-411 (LVAKE).

Belongs to the glycosyltransferase 20 family. In terms of assembly, homotetramer.

It carries out the reaction ADP-alpha-D-glucose + D-glucose 6-phosphate = alpha,alpha-trehalose 6-phosphate + ADP + H(+). It catalyses the reaction CDP-alpha-D-glucose + D-glucose 6-phosphate = alpha,alpha-trehalose 6-phosphate + CDP + H(+). The enzyme catalyses GDP-alpha-D-glucose + D-glucose 6-phosphate = alpha,alpha-trehalose 6-phosphate + GDP + H(+). The catalysed reaction is TDP-alpha-D-glucose + D-glucose 6-phosphate = 5-methyl-UDP + alpha,alpha-trehalose 6-phosphate + H(+). It carries out the reaction D-glucose 6-phosphate + UDP-alpha-D-glucose = alpha,alpha-trehalose 6-phosphate + UDP + H(+). The protein operates within glycan biosynthesis; trehalose biosynthesis. In terms of biological role, probably involved in the osmoprotection via the biosynthesis of trehalose and in the production of glycogen and alpha-glucan via the TreS-Pep2 branch involved in the biosynthesis of maltose-1-phosphate (M1P). Catalyzes the transfer of glucose from UDP-glucose (UDP-Glc) to D-glucose 6-phosphate (Glc-6-P) to form trehalose-6-phosphate. Probably also able to use ADP-Glc, CDP-Glc, GDP-Glc and TDP-Glc as glucosyl donors. This Mycobacterium bovis (strain ATCC BAA-935 / AF2122/97) protein is Trehalose-6-phosphate synthase.